Consider the following 393-residue polypeptide: Ninja-family protein 1 (393 aa).

2 disordered regions span residues 1-27 (MEGF…PGQL) and 155-200 (NDDW…KEMN). Residues 156-170 (DDWKKRKEAQSLKRL) are compositionally biased toward basic and acidic residues.

This sequence belongs to the Ninja family.

The protein resides in the nucleus. The protein is Ninja-family protein 1 of Zea mays (Maize).